A 273-amino-acid polypeptide reads, in one-letter code: Putative pyruvate, phosphate dikinase regulatory protein (273 aa).

Position 153 to 160 (153 to 160 (GISRTSKT)) interacts with ADP.

The protein belongs to the pyruvate, phosphate/water dikinase regulatory protein family. PDRP subfamily.

It carries out the reaction N(tele)-phospho-L-histidyl/L-threonyl-[pyruvate, phosphate dikinase] + ADP = N(tele)-phospho-L-histidyl/O-phospho-L-threonyl-[pyruvate, phosphate dikinase] + AMP + H(+). It catalyses the reaction N(tele)-phospho-L-histidyl/O-phospho-L-threonyl-[pyruvate, phosphate dikinase] + phosphate + H(+) = N(tele)-phospho-L-histidyl/L-threonyl-[pyruvate, phosphate dikinase] + diphosphate. In terms of biological role, bifunctional serine/threonine kinase and phosphorylase involved in the regulation of the pyruvate, phosphate dikinase (PPDK) by catalyzing its phosphorylation/dephosphorylation. This chain is Putative pyruvate, phosphate dikinase regulatory protein, found in Agrobacterium fabrum (strain C58 / ATCC 33970) (Agrobacterium tumefaciens (strain C58)).